A 90-amino-acid chain; its full sequence is Probable Fe(2+)-trafficking protein (90 aa).

It belongs to the Fe(2+)-trafficking protein family.

Could be a mediator in iron transactions between iron acquisition and iron-requiring processes, such as synthesis and/or repair of Fe-S clusters in biosynthetic enzymes. The chain is Probable Fe(2+)-trafficking protein from Vibrio vulnificus (strain CMCP6).